The primary structure comprises 417 residues: Protein translocase subunit SecD (417 aa).

The next 6 helical transmembrane spans lie at Leu-9–Ser-29, Ala-236–Tyr-256, Leu-258–Met-278, Pro-288–Phe-308, Phe-333–Leu-353, and Gly-360–Thr-380.

Belongs to the SecD/SecF family. SecD subfamily. As to quaternary structure, forms a complex with SecF. Part of the essential Sec protein translocation apparatus which comprises SecA, SecYEG and auxiliary proteins SecDF. Other proteins may also be involved.

The protein localises to the cell membrane. Functionally, part of the Sec protein translocase complex. Interacts with the SecYEG preprotein conducting channel. SecDF uses the proton motive force (PMF) to complete protein translocation after the ATP-dependent function of SecA. The chain is Protein translocase subunit SecD from Acidaminococcus fermentans (strain ATCC 25085 / DSM 20731 / CCUG 9996 / CIP 106432 / VR4).